The following is a 147-amino-acid chain: Response regulator Rcp1 (147 aa).

A Response regulatory domain is found at 10-135; it reads VILLVEDSKA…DLFKMVQGIE (126 aa). Position 68 is a 4-aspartylphosphate (Asp68).

In terms of processing, phosphorylated by Cph1.

In terms of biological role, forms a two-component system with Cph1 in which it acts as receiver substrate. The protein is Response regulator Rcp1 (rcp1) of Synechocystis sp. (strain ATCC 27184 / PCC 6803 / Kazusa).